The chain runs to 576 residues: Acyl-CoA ligase sidI (576 aa).

The short motif at 3–11 is the PTS2-type peroxisomal targeting signal element; it reads PVTTKTIRP. ATP is bound by residues D439, R454, and K553.

The protein belongs to the ATP-dependent AMP-binding enzyme family.

The protein localises to the peroxisome. It functions in the pathway siderophore biosynthesis. Functionally, acyl-CoA ligase; part of the gene cluster that mediates the biosynthesis of at least 11 siderophores, including beauverichelin A, dimerumic acid (DA), Na-dimethyl coprogen (NADC), eleutherazine B, ferricrocin (FC), fusarinine A, fusarinine C (FsC), metachelin A, mevalonolactone, rhodotorulic acid (RA) and tenellin. This cocktail of siderophores for iron metabolism is essential for virulence, and more specifically for the fungal virulence in penetrating through the host cuticle. Siderophore synthesis is also involved in conidial germination under iron-deficient conditions. For biosynthesis of fusarinine C, the transacylase SIDF transfers anhydromevalonyl to N(5)-hydroxyornithine. The required anhydromevalonyl-CoA moiety is derived from mevalonate by CoA ligation and dehydration catalyzed by SIDI and sidH respectively. The sequence is that of Acyl-CoA ligase sidI from Beauveria bassiana (strain ARSEF 2860) (White muscardine disease fungus).